We begin with the raw amino-acid sequence, 132 residues long: Small ribosomal subunit protein uS8 (132 aa).

The protein belongs to the universal ribosomal protein uS8 family. As to quaternary structure, part of the 30S ribosomal subunit. Contacts proteins S5 and S12.

Its function is as follows. One of the primary rRNA binding proteins, it binds directly to 16S rRNA central domain where it helps coordinate assembly of the platform of the 30S subunit. This Lactococcus lactis subsp. lactis (strain IL1403) (Streptococcus lactis) protein is Small ribosomal subunit protein uS8.